Here is a 1482-residue protein sequence, read N- to C-terminus: Chromosome partition protein MukB (1482 aa).

Position 34–41 (Gly-34–Ser-41) interacts with ATP. Coiled-coil stretches lie at residues Leu-337–Ala-468, Gln-509–Trp-604, Arg-780–Ser-805, Glu-835–Asp-1044, Thr-1070–Ala-1115, and Glu-1210–Val-1265. The tract at residues Pro-666–Arg-783 is flexible hinge.

Belongs to the SMC family. MukB subfamily. In terms of assembly, homodimerization via its hinge domain. Binds to DNA via its C-terminal region. Interacts, and probably forms a ternary complex, with MukE and MukF via its C-terminal region. The complex formation is stimulated by calcium or magnesium. Interacts with tubulin-related protein FtsZ.

It is found in the cytoplasm. The protein localises to the nucleoid. Plays a central role in chromosome condensation, segregation and cell cycle progression. Functions as a homodimer, which is essential for chromosome partition. Involved in negative DNA supercoiling in vivo, and by this means organize and compact chromosomes. May achieve or facilitate chromosome segregation by condensation DNA from both sides of a centrally located replisome during cell division. The polypeptide is Chromosome partition protein MukB (Serratia proteamaculans (strain 568)).